We begin with the raw amino-acid sequence, 450 residues long: Ammonium transporter Rh type A (450 aa).

The Cytoplasmic portion of the chain corresponds to 1-4 (MRFK). The helical transmembrane segment at 5-25 (FSLIALSLEVVMIVSFALFVE) threads the bilayer. Topologically, residues 26–72 (YETSQNGSQKSASQQNASQQNAAAQQNASQQGNASSPAKEDQFFQLY) are extracellular. Residues N31, N41, N52, and N58 are each glycosylated (N-linked (GlcNAc...) asparagine). The segment at 34–61 (QKSASQQNASQQNAAAQQNASQQGNASS) is disordered. Residues 73-93 (PLFQHVHVMIFVGFGFLMTFL) traverse the membrane as a helical segment. The Cytoplasmic segment spans residues 94-97 (KKYG). A helical transmembrane segment spans residues 98 to 118 (FSGVGFNLFLAALGLQWGTIV). Residues 119 to 134 (QGLLHSHGLKFPFRIK) lie on the Extracellular side of the membrane. The helical transmembrane segment at 135–155 (NMINADFSTATVLISFGAVLG) threads the bilayer. Residues 156 to 159 (KTSP) lie on the Cytoplasmic side of the membrane. A helical transmembrane segment spans residues 160-180 (IQMIIMTILEIAVFAGNEHLV). The Extracellular portion of the chain corresponds to 181 to 189 (TEIFKASDT). The chain crosses the membrane as a helical span at residues 190-210 (GASMTIHAFGAYFGLAVAGVL). Over 211–229 (YRSGLKHGHPNEESVYHSD) the chain is Cytoplasmic. The chain crosses the membrane as a helical span at residues 230-250 (LFAMIGTLFLWMFWPSFNSAI). Residues 251 to 260 (AQPENNQYRA) are Extracellular-facing. A helical membrane pass occupies residues 261-281 (IVNTYMSLAACVITAYALSSL). Topologically, residues 282–289 (VERRGRLD) are cytoplasmic. A helical membrane pass occupies residues 290-307 (MVHIQNATLAGGVAVGTC). The Extracellular segment spans residues 308 to 311 (ADME). Residues 312–332 (IPLYFAMTIGSIAGIISVLGY) form a helical membrane-spanning segment. Residues 333-349 (KFLSPLLAHKLMIHDTC) are Cytoplasmic-facing. Residues 350 to 370 (GVHNLHGLPGVFGGLASIVAI) form a helical membrane-spanning segment. Residues 371 to 384 (SWGKSTVSTMAMQA) lie on the Extracellular side of the membrane. A helical membrane pass occupies residues 385–405 (TALGSSIGSAIVGGLVTGLIL). Topologically, residues 406–450 (KLPVWNQPPDEYCFDDSVSWKVPKYRELDNYFFQHVTHNHVEHEV) are cytoplasmic.

Belongs to the ammonium transporter (TC 2.A.49) family. Rh subfamily. In terms of assembly, homodimer. Heterotrimer; a RHCE monomer interacts with a RHAG homodimer. Component of the ankyrin-1 complex in the erythrocyte, composed of ANK1, RHCE, RHAG, SLC4A1, EPB42, GYPA, GYPB and AQP1. Interacts with GYPB (via the N-terminal); this interaction bridges the (RHAG)2(RHCE) heterotrimer with the SLC4A1 Band 3 I dimer complexed with GYPA. Glycosylated.

It localises to the membrane. The enzyme catalyses methylamine(out) = methylamine(in). It catalyses the reaction NH4(+)(in) = NH4(+)(out). The catalysed reaction is CO2(out) = CO2(in). Functionally, component of the ankyrin-1 complex, a multiprotein complex involved in the stability and shape of the erythrocyte membrane. Heterotrimer with RHCE (RHAG)2(RHCE), that transports ammonium and its related derivative methylammonium, in both neutral and ionic forms, across the erythrocyte membrane. The transport of NH4(+) is electrogenic and masks the NH3 transport. Also, may act as a CO2 channel. Moreover in erythrocyte, regulates RHD membrane expression and is associated with rhesus blood group antigen expression. This chain is Ammonium transporter Rh type A, found in Rattus norvegicus (Rat).